Consider the following 305-residue polypeptide: Elongation factor Ts, mitochondrial (305 aa).

This sequence belongs to the EF-Ts family.

It localises to the mitochondrion. Its function is as follows. Associates with the EF-Tu.GDP complex and induces the exchange of GDP to GTP. It remains bound to the aminoacyl-tRNA.EF-Tu.GTP complex up to the GTP hydrolysis stage on the ribosome. The chain is Elongation factor Ts, mitochondrial (tsfm) from Danio rerio (Zebrafish).